The primary structure comprises 445 residues: Glycine--tRNA ligase (445 aa).

Substrate-binding residues include arginine 97 and glutamate 145. Residues 177–179 (RNE), 187–192 (FRTCEF), 262–263 (EI), and 308–311 (GLTR) contribute to the ATP site. Position 192–196 (192–196 (FEQME)) interacts with substrate. 304–308 (ETSAG) lines the substrate pocket.

It belongs to the class-II aminoacyl-tRNA synthetase family. As to quaternary structure, homodimer.

Its subcellular location is the cytoplasm. The catalysed reaction is tRNA(Gly) + glycine + ATP = glycyl-tRNA(Gly) + AMP + diphosphate. Its function is as follows. Catalyzes the attachment of glycine to tRNA(Gly). The sequence is that of Glycine--tRNA ligase from Borreliella afzelii (strain PKo) (Borrelia afzelii).